We begin with the raw amino-acid sequence, 160 residues long: Baculoviral IAP repeat-containing protein 5.1-B (160 aa).

The stretch at Gln-13 to Trp-83 is one BIR repeat. The residue at position 43 (Thr-43) is a Phosphothreonine; by CDK1. Residues Cys-66, Cys-69, His-86, and Cys-93 each coordinate Zn(2+).

The protein belongs to the IAP family. As to quaternary structure, component of the CPC at least composed of survivin/birc5, incenp, cdca8/borealin and/or cdca9/dasra-A, and aurkb/aurora-B. Interacts directly with incenp (via N-terminus), and may weakly interact with aurkb (via N-terminus) to stabilize the complex. Interacts with GTP-bound ran in both the S and M phases of the cell cycle. Also found in a complex with ubiquitin-mediated signaling proteins including at least usp9x/xFAM, nploc4/npl4 and ufd1. Post-translationally, ubiquitination is required for centrosome-targeting.

The protein localises to the cytoplasm. It is found in the nucleus. It localises to the chromosome. The protein resides in the centromere. Its subcellular location is the cytoskeleton. The protein localises to the spindle. Component of the chromosomal passenger complex (CPC), a complex that acts as a key regulator of mitosis. The CPC complex has essential functions at the centromere in ensuring correct chromosome alignment and segregation and is required for chromatin-induced microtubule stabilization and spindle assembly. Stimulates the mitotic kinase activity of aurkb/aurora-B in the CPC. Does not appear to exhibit anti-apoptotic activity. CPC. Does not appear to exhibit anti-apoptotic activity. This is Baculoviral IAP repeat-containing protein 5.1-B (birc5.1-b) from Xenopus laevis (African clawed frog).